The sequence spans 1011 residues: Beta-galactosidase A (1011 aa).

The N-terminal stretch at 1 to 19 (MKLLSSWVVAALAAQAAGA) is a signal peptide. Substrate contacts are provided by residues Tyr-96, 140-142 (NAE), and Asn-199. Glu-200 functions as the Proton donor in the catalytic mechanism. 2 cysteine pairs are disulfide-bonded: Cys-205–Cys-206 and Cys-267–Cys-316. Glu-299 acts as the Nucleophile in catalysis. Tyr-365 lines the substrate pocket. Residues Asn-374, Asn-456, Asn-625, Asn-707, Asn-763, Asn-780, and Asn-917 are each glycosylated (N-linked (GlcNAc...) asparagine).

It belongs to the glycosyl hydrolase 35 family. As to quaternary structure, monomer.

It localises to the secreted. It carries out the reaction Hydrolysis of terminal non-reducing beta-D-galactose residues in beta-D-galactosides.. Its function is as follows. Cleaves beta-linked terminal galactosyl residues from gangliosides, glycoproteins, and glycosaminoglycans. Has high in vitro transglycosylation activity with p-nitrophenyl-beta-D-galactopyranoside, methyl-beta-D-galactopyranoside or lactose as a donor and galactose as an acceptor. The sequence is that of Beta-galactosidase A (lacA) from Penicillium sp.